Consider the following 2542-residue polypeptide: Zinc finger FYVE domain-containing protein 26 (2542 aa).

2 disordered regions span residues 591 to 658 (HLPE…GPHT) and 740 to 811 (VTSN…QVEA). Serine 612 and serine 616 each carry phosphoserine. Residues 752–772 (RRYRPTAKRHSSLRRGRRTRR) show a composition bias toward basic residues. A compositionally biased stretch (low complexity) spans 785–803 (SLEGTSSELSTSTSEGSLS). Serine 798 is subject to Phosphoserine. Positions 866–891 (MFVERYQEVIQELARVEHKIENQNSD) form a coiled coil. The tract at residues 1273–1292 (SPRPSENPSAERKSDSSPKD) is disordered. The span at 1281 to 1290 (SAERKSDSSP) shows a compositional bias: basic and acidic residues. Positions 1495–1522 (VSDMAVPEELKSELQRKLTELRVYQKIL) form a coiled coil. Phosphoserine occurs at positions 1739, 1761, 1783, and 1785. Residues 1746–1807 (PVHQASDPET…LEFVPPETPP (62 aa)) are disordered. The span at 1757–1779 (SRSSSAEFSAAAAAPAPAAPGSA) shows a compositional bias: low complexity. The segment at 1815–1875 (DETESMCMVC…VCDQCYSYYN (61 aa)) adopts an FYVE-type zinc-finger fold. 8 residues coordinate Zn(2+): cysteine 1821, cysteine 1824, cysteine 1838, cysteine 1841, cysteine 1846, cysteine 1849, cysteine 1867, and cysteine 1870.

This sequence belongs to the ZFYVE26 family. Interacts with AP5Z1, AP5B1, AP5S1 and SPG11. Interacts with TTC19 and KIF13A.

Its subcellular location is the cytoplasm. The protein resides in the cytoskeleton. It localises to the microtubule organizing center. The protein localises to the centrosome. It is found in the midbody. Functionally, phosphatidylinositol 3-phosphate-binding protein required for the abscission step in cytokinesis: recruited to the midbody during cytokinesis and acts as a regulator of abscission. May also be required for efficient homologous recombination DNA double-strand break repair. This is Zinc finger FYVE domain-containing protein 26 (Zfyve26) from Rattus norvegicus (Rat).